A 127-amino-acid polypeptide reads, in one-letter code: Large ribosomal subunit protein bL17 (127 aa).

It belongs to the bacterial ribosomal protein bL17 family. Part of the 50S ribosomal subunit. Contacts protein L32.

The sequence is that of Large ribosomal subunit protein bL17 from Legionella pneumophila (strain Lens).